The chain runs to 161 residues: uncharacterized protein (161 aa).

Disordered regions lie at residues 1-67 (MNSN…IQNF) and 80-147 (DSHQ…KKKQ). Positions 84 to 126 (NFNDNGFNNNNNNNNSNMNHNFSNQNNYNNNNNNNNNNNSNFN) are enriched in low complexity. The segment covering 135–147 (GTSSQVGNNKKKQ) has biased composition (polar residues).

This is an uncharacterized protein from Dictyostelium discoideum (Social amoeba).